Consider the following 143-residue polypeptide: Transcriptional regulator MraZ (143 aa).

2 consecutive SpoVT-AbrB domains span residues 5–47 (EYSH…PMPV) and 76–119 (AMEA…SDEN).

The protein belongs to the MraZ family. In terms of assembly, forms oligomers.

Its subcellular location is the cytoplasm. The protein localises to the nucleoid. The chain is Transcriptional regulator MraZ from Leuconostoc citreum (strain KM20).